The primary structure comprises 216 residues: Somatotropin (216 aa).

A signal peptide spans 1-26 (MAAGSWTAGLLAFALLCLPWPQEASA). A Zn(2+)-binding site is contributed by His-45. Cysteines 78 and 189 form a disulfide. The residue at position 131 (Ser-131) is a Phosphoserine. Glu-198 provides a ligand contact to Zn(2+). Cys-206 and Cys-214 are disulfide-bonded.

This sequence belongs to the somatotropin/prolactin family.

Its subcellular location is the secreted. Functionally, plays an important role in growth control. Its major role in stimulating body growth is to stimulate the liver and other tissues to secrete IGF1. It stimulates both the differentiation and proliferation of myoblasts. It also stimulates amino acid uptake and protein synthesis in muscle and other tissues. This is Somatotropin (GH1) from Oryctolagus cuniculus (Rabbit).